The primary structure comprises 84 residues: Large ribosomal subunit protein bL27 (84 aa).

Residues methionine 1–leucine 21 form a disordered region.

Belongs to the bacterial ribosomal protein bL27 family.

This chain is Large ribosomal subunit protein bL27, found in Francisella tularensis subsp. holarctica (strain FTNF002-00 / FTA).